Here is a 354-residue protein sequence, read N- to C-terminus: Guanine nucleotide-binding protein G(t) subunit alpha-2 (354 aa).

The segment at 1-27 (MGSGASAEDKELAKRSKELEKKLQEDA) is disordered. Gly-2 carries N-myristoyl glycine lipidation. Positions 7-27 (AEDKELAKRSKELEKKLQEDA) are enriched in basic and acidic residues. The G-alpha domain occupies 32-354 (KTVKLLLLGA…KENLKDCGLF (323 aa)). A G1 motif region spans residues 35-48 (KLLLLGAGESGKST). GTP-binding positions include 40-47 (GAGESGKS), 175-181 (LRSRVKT), 200-204 (DVGGQ), 269-272 (NKKD), and Ala-326. Mg(2+) contacts are provided by Ser-47 and Thr-181. Positions 173 to 181 (DVLRSRVKT) are G2 motif. The G3 motif stretch occupies residues 196–205 (FRMFDVGGQR). Residues 265–272 (VLFLNKKD) form a G4 motif region. Residues 324–329 (TCATDT) are G5 motif.

This sequence belongs to the G-alpha family. G(i/o/t/z) subfamily. In terms of assembly, g proteins are composed of 3 units; alpha, beta and gamma. The alpha chain contains the guanine nucleotide binding site. In terms of tissue distribution, retinal rod outer segment.

It localises to the cell projection. The protein localises to the cilium. Its subcellular location is the photoreceptor outer segment. It is found in the photoreceptor inner segment. Its function is as follows. Guanine nucleotide-binding proteins (G proteins) are involved as modulators or transducers in various transmembrane signaling systems. Transducin is an amplifier and one of the transducers of a visual impulse that performs the coupling between rhodopsin and cGMP-phosphodiesterase. This chain is Guanine nucleotide-binding protein G(t) subunit alpha-2 (GNAT2), found in Bos taurus (Bovine).